The primary structure comprises 228 residues: Putative N-acetylmannosamine-6-phosphate 2-epimerase (228 aa).

It belongs to the NanE family.

It catalyses the reaction an N-acyl-D-glucosamine 6-phosphate = an N-acyl-D-mannosamine 6-phosphate. It functions in the pathway amino-sugar metabolism; N-acetylneuraminate degradation; D-fructose 6-phosphate from N-acetylneuraminate: step 3/5. Converts N-acetylmannosamine-6-phosphate (ManNAc-6-P) to N-acetylglucosamine-6-phosphate (GlcNAc-6-P). The sequence is that of Putative N-acetylmannosamine-6-phosphate 2-epimerase from Lactiplantibacillus plantarum (strain ATCC BAA-793 / NCIMB 8826 / WCFS1) (Lactobacillus plantarum).